Consider the following 720-residue polypeptide: Catalase-peroxidase (720 aa).

The first 21 residues, 1 to 21, serve as a signal peptide directing secretion; it reads MSENKCPVMHGSATTTENSMA. A cross-link (tryptophyl-tyrosyl-methioninium (Trp-Tyr) (with M-248)) is located at residues 94 to 222; the sequence is WHAAGTYRIA…LAAVMMGLIY (129 aa). His-95 (proton acceptor) is an active-site residue. A cross-link (tryptophyl-tyrosyl-methioninium (Tyr-Met) (with W-94)) is located at residues 222 to 248; the sequence is YVNPEGVDGKPDPLKTAQDIRETFARM. Heme b is bound at residue His-263.

The protein belongs to the peroxidase family. Peroxidase/catalase subfamily. As to quaternary structure, homodimer or homotetramer. The cofactor is heme b. In terms of processing, formation of the three residue Trp-Tyr-Met cross-link is important for the catalase, but not the peroxidase activity of the enzyme.

It carries out the reaction H2O2 + AH2 = A + 2 H2O. It catalyses the reaction 2 H2O2 = O2 + 2 H2O. Functionally, bifunctional enzyme with both catalase and broad-spectrum peroxidase activity. This is Catalase-peroxidase from Shewanella denitrificans (strain OS217 / ATCC BAA-1090 / DSM 15013).